Consider the following 471-residue polypeptide: Acetylcholinesterase collagenic tail peptide (471 aa).

The first 30 residues, 1 to 30 (MLGILLQKATATLASGLNSSRAGMFPIALG), serve as a signal peptide directing secretion. The segment at 70 to 86 (CCLLTPPPPPMFPPPFF) is PRAD. Collagen-like domains follow at residues 118–282 (GPPG…SGLP) and 293–307 (GPKG…VGRC). Disordered regions lie at residues 140-205 (EIGE…GEKG) and 237-267 (KGVS…IGPP). Composition is skewed to low complexity over residues 155-164 (VRGPRGMPGS) and 242-251 (APGHRGPVGR). A run of 2 repeats spans residues 388 to 413 (FCGD…TDSC) and 420 to 443 (YCGD…YHTC). The segment at 388–443 (FCGDEIVQVENGEECDDGNRIVTDSCINCKQAYCGDGYLQSGLEECDGKDFGYHTC) is 2 X 26 AA approximate repeats.

This sequence belongs to the COLQ family. In terms of assembly, the asymmetric form of AChE is a disulfide-bonded oligomer composed of a collagenic subunit (Q) and a variable number of asymmetric (T) catalytic subunits. The N-terminal of the collagenic subunit (Q) associates with the C-terminal of the catalytic subunit (T). Expressed in electric organs but not in muscle.

Its subcellular location is the synapse. In terms of biological role, anchors the catalytic subunits of asymmetric AChE to the synaptic basal lamina. The sequence is that of Acetylcholinesterase collagenic tail peptide from Torpedo marmorata (Marbled electric ray).